Here is a 216-residue protein sequence, read N- to C-terminus: RNA pyrophosphohydrolase (216 aa).

The Nudix hydrolase domain maps to 6–149 (GFRPNVGIIL…KRDVYQLALT (144 aa)). A Nudix box motif is present at residues 38 to 59 (GGIKYGETPMQAMYRELHEETG). A disordered region spans residues 159-188 (AQRTDKSRGPRAPRYPRVANGHAASEAPAA).

The protein belongs to the Nudix hydrolase family. RppH subfamily. A divalent metal cation serves as cofactor.

Its function is as follows. Accelerates the degradation of transcripts by removing pyrophosphate from the 5'-end of triphosphorylated RNA, leading to a more labile monophosphorylated state that can stimulate subsequent ribonuclease cleavage. In Burkholderia mallei (strain NCTC 10247), this protein is RNA pyrophosphohydrolase.